The primary structure comprises 569 residues: Hexose transporter HXT8 (569 aa).

The tract at residues 1 to 38 (MTDRKTNLPEEPIFEEAEDDGCPSIENSSHLSVPTVEE) is disordered. At 1 to 61 (MTDRKTNLPE…EVVVPEKPAS (61 aa)) the chain is on the cytoplasmic side. The span at 12–21 (PIFEEAEDDG) shows a compositional bias: acidic residues. The chain crosses the membrane as a helical span at residues 62 to 82 (AYATVSIMCLCMAFGGFMSGW). Over 83–118 (DTGTISGFVNQTDFLRRFGNYSHSKNTYYLSNVRTG) the chain is Extracellular. 2 N-linked (GlcNAc...) asparagine glycosylation sites follow: Asn92 and Asn102. A helical membrane pass occupies residues 119–139 (LIVSIFNVGSAIGCLFLSKLG). Over 140–145 (DIYGRC) the chain is Cytoplasmic. The helical transmembrane segment at 146–166 (MGLIIVIVVYMVGIVIQIASI) threads the bilayer. The Extracellular portion of the chain corresponds to 167 to 176 (DKWYQYFIGR). The chain crosses the membrane as a helical span at residues 177 to 197 (IIAGIGAGSISVLAPMLISET). Residues 198–203 (APKHIR) lie on the Cytoplasmic side of the membrane. Residues 204–224 (GTLLACWQLMVTFAIFLGYCT) traverse the membrane as a helical segment. The Extracellular segment spans residues 225 to 238 (NYGTKTYSNSVQWR). Residues 239-259 (VPLGLCFAWAIIMIGGMTFVP) form a helical membrane-spanning segment. Residues 260-342 (ESPRFLVQVG…INSLQQLTGD (83 aa)) are Cytoplasmic-facing. A helical membrane pass occupies residues 343–359 (NYFFYYGTTIFKSVGMN). The Extracellular portion of the chain corresponds to 360–365 (DSFETS). The chain crosses the membrane as a helical span at residues 366 to 383 (IVLGIVNFASCFFSLYSV). The Cytoplasmic portion of the chain corresponds to 384 to 390 (DKLGRRR). The chain crosses the membrane as a helical span at residues 391–411 (CLLLGAATMTACMVIYASVGV). Topologically, residues 412-433 (TRLYPNGKSEPSSKGAGNCTIV) are extracellular. Asn429 is a glycosylation site (N-linked (GlcNAc...) asparagine). Residues 434 to 454 (FTCFYIFCFSCTWGPVCYVII) traverse the membrane as a helical segment. At 455-471 (SETFPLRVRSKCMSVAT) the chain is on the cytoplasmic side. Residues 472–492 (AANLLWGFLIGFFTPFITSAI) traverse the membrane as a helical segment. Position 493 (Asn493) is a topological domain, extracellular. Residues 494 to 514 (FYYGYVFMGCLAFSYFYVFFF) traverse the membrane as a helical segment. The Cytoplasmic segment spans residues 515-569 (VPETKGLTLEEVDEMWMDGVLPWKSESWVPASRRDGDYDNEKLQHDEKPFYKRMF).

It belongs to the major facilitator superfamily. Sugar transporter (TC 2.A.1.1) family.

Its subcellular location is the membrane. Functionally, probable glucose transporter. This is Hexose transporter HXT8 (HXT8) from Saccharomyces cerevisiae (strain ATCC 204508 / S288c) (Baker's yeast).